A 488-amino-acid chain; its full sequence is Ribulose bisphosphate carboxylase large chain (488 aa).

Substrate contacts are provided by asparagine 127 and threonine 177. The active-site Proton acceptor is lysine 179. Substrate is bound at residue lysine 181. Lysine 205, aspartate 207, and glutamate 208 together coordinate Mg(2+). Lysine 205 carries the N6-carboxylysine modification. The active-site Proton acceptor is histidine 297. Positions 298, 330, and 382 each coordinate substrate.

Belongs to the RuBisCO large chain family. Type I subfamily. Heterohexadecamer of 8 large chains and 8 small chains. It depends on Mg(2+) as a cofactor.

The protein localises to the plastid. The protein resides in the chloroplast. It carries out the reaction 2 (2R)-3-phosphoglycerate + 2 H(+) = D-ribulose 1,5-bisphosphate + CO2 + H2O. The catalysed reaction is D-ribulose 1,5-bisphosphate + O2 = 2-phosphoglycolate + (2R)-3-phosphoglycerate + 2 H(+). Its function is as follows. RuBisCO catalyzes two reactions: the carboxylation of D-ribulose 1,5-bisphosphate, the primary event in carbon dioxide fixation, as well as the oxidative fragmentation of the pentose substrate in the photorespiration process. Both reactions occur simultaneously and in competition at the same active site. The protein is Ribulose bisphosphate carboxylase large chain (rbcL) of Pyropia dentata (Red alga).